We begin with the raw amino-acid sequence, 904 residues long: Phosphoenolpyruvate carboxylase (904 aa).

Catalysis depends on residues H151 and K570.

This sequence belongs to the PEPCase type 1 family. Mg(2+) serves as cofactor.

It catalyses the reaction oxaloacetate + phosphate = phosphoenolpyruvate + hydrogencarbonate. Its function is as follows. Forms oxaloacetate, a four-carbon dicarboxylic acid source for the tricarboxylic acid cycle. This chain is Phosphoenolpyruvate carboxylase, found in Xanthomonas campestris pv. campestris (strain 8004).